The primary structure comprises 544 residues: MAKEIKFDMNARDLLKKGVDELANAVKVTLGPKGRNVILEKKFGAPQITKDGVTVAKEIELACPYENMGAQLVKEVASKTNDKAGDGTTTATVLAQAIIGVGLKNVTAGANPMDLKRGIDKAVSKVVESIASQSEAVGTNMDRIEHVAKISANGDEGIGKLIAEAMQKVKKEGVITVEEAKGTETTVEVVEGMQFDRGYISAYFVTDTEKMETQFENPYILIYDKKISVLKDLLPILEQMVQSGRALLIIAEDIDSEALATLVVNRLRGGLKVCAVKAPGFGDRRKAMLEDIAILTGGTVITEEKGMKLEDAKMDMLGSADKVTVNKDNTTIVKGNGDKAAIESRIGQIKAQIETTTSDYDKEKLQERLAKLAGGVAVLYVGAPSEVEMKEKKDRVDDALHATRAAIEEGTVPGGGVAYLRAIPALEGLKGENEDETTGIEIVKRAIEEPLRQIVNNAGKEGAVVVQKVKEGTGAFGYNARTDVYEDLSEAGVVDPAKVTRIALENAASIAGMFLTTECVVADKKEEAPAPPMNPGMGGMGGMM.

Residues 29–32, K50, 86–90, G415, and D495 contribute to the ATP site; these read TLGP and DGTTT.

The protein belongs to the chaperonin (HSP60) family. In terms of assembly, forms a cylinder of 14 subunits composed of two heptameric rings stacked back-to-back. Interacts with the co-chaperonin GroES.

It localises to the cytoplasm. It carries out the reaction ATP + H2O + a folded polypeptide = ADP + phosphate + an unfolded polypeptide.. Functionally, together with its co-chaperonin GroES, plays an essential role in assisting protein folding. The GroEL-GroES system forms a nano-cage that allows encapsulation of the non-native substrate proteins and provides a physical environment optimized to promote and accelerate protein folding. The protein is Chaperonin GroEL of Tannerella forsythia (Bacteroides forsythus).